Consider the following 216-residue polypeptide: Thymidine kinase (216 aa).

Residues 9 to 16 and 86 to 89 each bind ATP; these read GTMDCGKS and DEAQ. The active-site Proton acceptor is the Glu-87.

Belongs to the thymidine kinase family. In terms of assembly, homotetramer.

The protein localises to the cytoplasm. It carries out the reaction thymidine + ATP = dTMP + ADP + H(+). The protein is Thymidine kinase of Streptomyces avermitilis (strain ATCC 31267 / DSM 46492 / JCM 5070 / NBRC 14893 / NCIMB 12804 / NRRL 8165 / MA-4680).